We begin with the raw amino-acid sequence, 371 residues long: Deoxyhypusine synthase (371 aa).

Residues 112–116 (SNLVT), 138–140 (SAG), glutamate 144, and aspartate 245 contribute to the NAD(+) site. 143–144 (EE) provides a ligand contact to spermidine. Aspartate 250 contacts spermidine. Glycine 291 contributes to the NAD(+) binding site. Histidine 296 contributes to the spermidine binding site. 316–317 (TG) provides a ligand contact to NAD(+). Residues 322 to 324 (GSD) and 331 to 337 (EAVSWGK) contribute to the spermidine site. Lysine 337 (nucleophile) is an active-site residue. Position 350-351 (350-351 (EA)) interacts with NAD(+).

The protein belongs to the deoxyhypusine synthase family. NAD(+) serves as cofactor.

The catalysed reaction is [eIF5A protein]-L-lysine + spermidine = [eIF5A protein]-deoxyhypusine + propane-1,3-diamine. The protein operates within protein modification; eIF5A hypusination. Functionally, catalyzes the NAD-dependent oxidative cleavage of spermidine and the subsequent transfer of the butylamine moiety of spermidine to the epsilon-amino group of a critical lysine residue of the eIF-5A precursor protein to form the intermediate deoxyhypusine residue. This is the first step of the post-translational modification of that lysine into an unusual amino acid residue named hypusine. Hypusination is unique to mature eIF-5A factor and is essential for its function. The polypeptide is Deoxyhypusine synthase (Caenorhabditis elegans).